The sequence spans 461 residues: tRNA modification GTPase MnmE (461 aa).

R23, E88, and R127 together coordinate (6S)-5-formyl-5,6,7,8-tetrahydrofolate. The TrmE-type G domain maps to 223 to 383; the sequence is GLNTVIVGKP…LKECIKNLFF (161 aa). N233 serves as a coordination point for K(+). Residues 233–238, 252–258, and 277–280 each bind GTP; these read NVGKSS, TEIPGTT, and DTAG. Position 237 (S237) interacts with Mg(2+). Positions 252, 254, and 257 each coordinate K(+). T258 provides a ligand contact to Mg(2+). K461 is a (6S)-5-formyl-5,6,7,8-tetrahydrofolate binding site.

This sequence belongs to the TRAFAC class TrmE-Era-EngA-EngB-Septin-like GTPase superfamily. TrmE GTPase family. Homodimer. Heterotetramer of two MnmE and two MnmG subunits. K(+) serves as cofactor.

The protein localises to the cytoplasm. Functionally, exhibits a very high intrinsic GTPase hydrolysis rate. Involved in the addition of a carboxymethylaminomethyl (cmnm) group at the wobble position (U34) of certain tRNAs, forming tRNA-cmnm(5)s(2)U34. This chain is tRNA modification GTPase MnmE, found in Clostridium botulinum (strain Langeland / NCTC 10281 / Type F).